Reading from the N-terminus, the 386-residue chain is Chorismate synthase (386 aa).

Residues 32-60 (LPLSEDDVQRELDRRRPGQSGVSTPRSER) form a disordered region. Over residues 38-47 (DVQRELDRRR) the composition is skewed to basic and acidic residues. Arg-46 serves as a coordination point for NADP(+). FMN contacts are provided by residues 123 to 125 (RAS), Gly-290, 305 to 309 (KPTPS), and Arg-332.

It belongs to the chorismate synthase family. The cofactor is FMNH2.

The catalysed reaction is 5-O-(1-carboxyvinyl)-3-phosphoshikimate = chorismate + phosphate. It functions in the pathway metabolic intermediate biosynthesis; chorismate biosynthesis; chorismate from D-erythrose 4-phosphate and phosphoenolpyruvate: step 7/7. Its function is as follows. Catalyzes the anti-1,4-elimination of the C-3 phosphate and the C-6 proR hydrogen from 5-enolpyruvylshikimate-3-phosphate (EPSP) to yield chorismate, which is the branch point compound that serves as the starting substrate for the three terminal pathways of aromatic amino acid biosynthesis. This reaction introduces a second double bond into the aromatic ring system. This Methanopyrus kandleri (strain AV19 / DSM 6324 / JCM 9639 / NBRC 100938) protein is Chorismate synthase.